Consider the following 107-residue polypeptide: MNKQWTIIFALIFTLIVAIFAVINVRSVEVDYLFGRSEWPLILVILGSVLMGALIVFSVGIFQVMKLKREIKTLRKENRTAIHKQEDTHLADQTDTQDASAMIEKKD.

The next 2 helical transmembrane spans lie at 5-25 and 42-62; these read WTIIFALIFTLIVAIFAVINV and ILVILGSVLMGALIVFSVGIF. A compositionally biased stretch (basic and acidic residues) spans 82–92; sequence IHKQEDTHLAD. The tract at residues 82 to 107 is disordered; it reads IHKQEDTHLADQTDTQDASAMIEKKD.

The protein resides in the cell membrane. This is an uncharacterized protein from Bacillus subtilis (strain 168).